The primary structure comprises 246 residues: uncharacterized protein (246 aa).

This is an uncharacterized protein from Methanocaldococcus jannaschii (strain ATCC 43067 / DSM 2661 / JAL-1 / JCM 10045 / NBRC 100440) (Methanococcus jannaschii).